A 313-amino-acid chain; its full sequence is Guanine nucleotide-binding protein-like 3-like protein (313 aa).

The span at 1–14 shows a compositional bias: basic residues; that stretch reads MGIKKKRQSKRLTT. The interval 1–41 is disordered; it reads MGIKKKRQSKRLTTRKREGMLKRARANERKKRRMDRKMQAK. Residues 15 to 27 are compositionally biased toward basic and acidic residues; that stretch reads RKREGMLKRARAN. GTP-binding positions include 95 to 98, 178 to 185, and 212 to 215; these read SKSD, GNPGSGKN, and TLSS.

It belongs to the MMR1/HSR1 GTP-binding protein family.

The protein resides in the nucleus. It is found in the nucleolus. Functionally, required for normal processing of ribosomal pre-rRNA. Required for cell proliferation. Binds GTP. The polypeptide is Guanine nucleotide-binding protein-like 3-like protein (Encephalitozoon cuniculi (strain GB-M1) (Microsporidian parasite)).